Reading from the N-terminus, the 288-residue chain is Probable proteasome subunit alpha type-7 (288 aa).

The residue at position 2 (Thr2) is an N-acetylthreonine. Residues 247–288 (INGDDDEDEDDSDNVMSSDDENAPVATNANATTDQEGDIHLE) are disordered. Residues 249 to 268 (GDDDEDEDDSDNVMSSDDEN) show a composition bias toward acidic residues. The segment covering 269 to 279 (APVATNANATT) has biased composition (low complexity).

It belongs to the peptidase T1A family. As to quaternary structure, the 26S proteasome consists of a 20S proteasome core and two 19S regulatory subunits. The 20S proteasome core is composed of 28 subunits that are arranged in four stacked rings, resulting in a barrel-shaped structure. The two end rings are each formed by seven alpha subunits, and the two central rings are each formed by seven beta subunits. The catalytic chamber with the active sites is on the inside of the barrel. The alpha and beta forms are probably products of the same gene with different post-translational modifications.

It localises to the cytoplasm. Its subcellular location is the nucleus. In terms of biological role, the proteasome degrades poly-ubiquitinated proteins in the cytoplasm and in the nucleus. It is essential for the regulated turnover of proteins and for the removal of misfolded proteins. The proteasome is a multicatalytic proteinase complex that is characterized by its ability to cleave peptides with Arg, Phe, Tyr, Leu, and Glu adjacent to the leaving group at neutral or slightly basic pH. It has an ATP-dependent proteolytic activity. This chain is Probable proteasome subunit alpha type-7 (PRE10), found in Saccharomyces cerevisiae (strain ATCC 204508 / S288c) (Baker's yeast).